The sequence spans 537 residues: MATVDLSWRLPLYILLLLLATTWVSAAVNDCSHLKCFYNSRANVSCMWSPEEALNVTSCHIHAKSDMRHWNKTCELTPVRQASWACNLILGPLPDSQSLTSVDLLSLSVVCWEEKGWRRVKTCTFHPFDNLRLIAPHSLQVLHIETRRCNISWEVSQVSHYVNPYLEFEARRRLLDRSWEDASVFSLKQRQQWIFLETLTPDTSYELQVRVIAQRGKTRTWSPWSQPMAFRTRPADPKEIFPLPWLRCLLLVLGCFFGFLSCVCVLVKCRYLGPWLKTLLKCHIPDPSEFFSQLSSQHGGDLQKWLSSPVPQSFFSPTGSAPEISPLEVLDRDSKTMQMLLFQKEKASSPSPSGHSQASCFTNQGYFFFHLSNALEIESCQVYFTYDPCMEEDVEEDGPRLPEESPLPPLLPFTGEQDDYCAFPPRDDLLLFSPSMSTPNTAYGNSITPEERPPLSLQEGLPSLASPDLMGLQHPLELELGDDGEGMSTNSSGQQASVPEAALMGTTKTEARPVLTLNTDAYLSLQELQAQDSAHLI.

A signal peptide spans Met-1–Ala-26. The Extracellular segment spans residues Ala-27 to Glu-239. An intrachain disulfide couples Cys-36 to Cys-46. Asn-43, Asn-55, and Asn-71 each carry an N-linked (GlcNAc...) asparagine glycan. Cys-74 and Cys-86 form a disulfide bridge. The Fibronectin type-III domain occupies Ala-135–Ala-235. Asn-150 is a glycosylation site (N-linked (GlcNAc...) asparagine). The short motif at Trp-221–Ser-225 is the WSXWS motif element. A helical membrane pass occupies residues Ile-240–Val-267. Residues Lys-268–Ile-537 are Cytoplasmic-facing. The short motif at Leu-280–Ser-288 is the Box 1 motif element. 2 disordered regions span residues Ala-442–Ser-466 and Glu-479–Val-498. Residues Met-487–Ser-497 show a composition bias toward polar residues.

It belongs to the type I cytokine receptor family. Type 4 subfamily. As to quaternary structure, non-covalent dimer of an alpha and a beta subunit. IL2R exists in 3 different forms: a high affinity dimer, an intermediate affinity monomer (beta subunit), and a low affinity monomer (alpha subunit). The high and intermediate affinity forms also associate with a gamma subunit. Interacts with SHB upon interleukin stimulation.

The protein resides in the cell membrane. It is found in the cell surface. In terms of biological role, receptor for interleukin-2. This beta subunit is involved in receptor mediated endocytosis and transduces the mitogenic signals of IL2. Probably in association with IL15RA, involved in the stimulation of neutrophil phagocytosis by IL15. This Rattus norvegicus (Rat) protein is Interleukin-2 receptor subunit beta (Il2rb).